The sequence spans 157 residues: Peptide methionine sulfoxide reductase MsrA (157 aa).

Residue cysteine 10 is part of the active site.

The protein belongs to the MsrA Met sulfoxide reductase family.

It carries out the reaction L-methionyl-[protein] + [thioredoxin]-disulfide + H2O = L-methionyl-(S)-S-oxide-[protein] + [thioredoxin]-dithiol. The catalysed reaction is [thioredoxin]-disulfide + L-methionine + H2O = L-methionine (S)-S-oxide + [thioredoxin]-dithiol. Functionally, has an important function as a repair enzyme for proteins that have been inactivated by oxidation. Catalyzes the reversible oxidation-reduction of methionine sulfoxide in proteins to methionine. The sequence is that of Peptide methionine sulfoxide reductase MsrA from Clostridium perfringens (strain ATCC 13124 / DSM 756 / JCM 1290 / NCIMB 6125 / NCTC 8237 / Type A).